The chain runs to 124 residues: Small ribosomal subunit protein bS6 (124 aa).

A disordered region spans residues 96–124; sequence ETGPSPMMKEVQREEAKKAAAAQPTEAQA. Residues 114–124 show a composition bias toward low complexity; it reads AAAAQPTEAQA.

Belongs to the bacterial ribosomal protein bS6 family.

In terms of biological role, binds together with bS18 to 16S ribosomal RNA. The sequence is that of Small ribosomal subunit protein bS6 from Burkholderia lata (strain ATCC 17760 / DSM 23089 / LMG 22485 / NCIMB 9086 / R18194 / 383).